Here is a 619-residue protein sequence, read N- to C-terminus: Protein Atg16l2 (619 aa).

The disordered stretch occupies residues 57-78 (LQPEPNSVTPTTHQGPWEESEL). Positions 60–70 (EPNSVTPTTHQ) are enriched in polar residues. A coiled-coil region spans residues 116–227 (AALGTLESEL…QARVSQELKK (112 aa)). WD repeat units lie at residues 334-373 (AHLSEVNAVRFGPNSSLLATGGADRLIHLWNVVGSRLEAN), 378-417 (GAGGSITSVDFDPSGYQVLAATYNQAAQLWKVGEAQSKET), 420-454 (GHKDKVTAAKFKLTRHQAVTGSRDRTVKEWDLGRA), 455-498 (YCSR…CTQV), 500-539 (PVQGRVTSLSLSHDQLHLLSCSRDNTLKVIDLRVSNIRQV), 546-585 (KCGSDWTKAVFSPDRSYALAGSCDGALYIWDVDTGKLESR), and 589-619 (PHCAAVNAVAWCYSGSHMVSVDQGRKVVLWQ).

The protein belongs to the WD repeat ATG16 family. In terms of assembly, homooligomer. Heterooligomer with ATG16L1. Interacts with ATG5. Self-oligomerizes to form a 800-kDa complex composed of ATG12-ATG5 and ATG16L2. Interacts with RAB33B.

Its subcellular location is the cytoplasm. It localises to the cytosol. May play a role in regulating epithelial homeostasis in an ATG16L1-dependent manner. This Homo sapiens (Human) protein is Protein Atg16l2 (ATG16L2).